The primary structure comprises 405 residues: Deoxyguanosinetriphosphate triphosphohydrolase-like protein (405 aa).

The region spanning 75–219 is the HD domain; it reads RLTHTIEVAQ…AAIADDIAYN (145 aa).

It belongs to the dGTPase family. Type 2 subfamily.

In Rhizobium leguminosarum bv. trifolii (strain WSM2304), this protein is Deoxyguanosinetriphosphate triphosphohydrolase-like protein.